The primary structure comprises 105 residues: Large ribosomal subunit protein eL36 (105 aa).

Residues 86 to 105 are disordered; that stretch reads QAGKKKRDDIANINRKASAK.

This sequence belongs to the eukaryotic ribosomal protein eL36 family.

This Dictyostelium discoideum (Social amoeba) protein is Large ribosomal subunit protein eL36 (rpl36).